A 470-amino-acid polypeptide reads, in one-letter code: Putative multidrug resistance protein MdtD (470 aa).

Residues 1 to 11 (MTELPDNTRWQ) lie on the Periplasmic side of the membrane. A helical transmembrane segment spans residues 12–32 (LWIVALGFFMQSLDTTIVNTA). Residues 33-48 (LPSMAKSLGESPLHMH) lie on the Cytoplasmic side of the membrane. Residues 49–69 (MVVVSYVLTVAVMLPASGWLA) form a helical membrane-spanning segment. Over 70–76 (DKIGVRN) the chain is Periplasmic. Residues 77–97 (IFFAAIVLFTLGSLFCALSGT) form a helical membrane-spanning segment. At 98–101 (LNQL) the chain is on the cytoplasmic side. A helical transmembrane segment spans residues 102–124 (VLARVLQGVGGAMMVPVGRLTVM). Over 125–137 (KIVPRAQYMAAMT) the chain is Periplasmic. A helical transmembrane segment spans residues 138-158 (FVTLPGQIGPLLGPALGGVLV). The Cytoplasmic segment spans residues 159-164 (EYASWH). The chain crosses the membrane as a helical span at residues 165–185 (WIFLINIPVGIVGAMATFMLM). Topologically, residues 186–196 (PNYTIETRRFD) are periplasmic. A helical membrane pass occupies residues 197 to 217 (LPGFLLLAIGMAVLTLALDGS). Over 218-221 (KSMG) the chain is Cytoplasmic. Residues 222–242 (ISPWTLAGLAAGGAAAILLYL) traverse the membrane as a helical segment. The Periplasmic portion of the chain corresponds to 243–262 (LHAKKNSGALFSLRLFRTPT). Residues 263-283 (FSLGLLGSFAGRIGSGMLPFM) form a helical membrane-spanning segment. Residues 284–285 (TP) are Cytoplasmic-facing. The helical transmembrane segment at 286–306 (VFLQIGLGFSPFHAGLMMIPM) threads the bilayer. At 307 to 341 (VLGSMGMKRIVVQIVNRFGYRRVLVATTLGLALVS) the chain is on the periplasmic side. The chain crosses the membrane as a helical span at residues 342-362 (LLFMSVALLGWYYLLPLVLLL). Over 363-395 (QGMVNSARFSSMNTLTLKDLPDTLASSGNSLLS) the chain is Cytoplasmic. The helical transmembrane segment at 396 to 416 (MIMQLSMSIGVTIAGMLLGMF) threads the bilayer. Over 417-430 (GQQHIGIDSSATHH) the chain is Periplasmic. Residues 431–451 (VFMYTWLCMAVIIALPAIIFA) traverse the membrane as a helical segment. Topologically, residues 452-470 (RVPNDTQQNMVISRRKRSL) are cytoplasmic.

It belongs to the major facilitator superfamily. TCR/Tet family.

Its subcellular location is the cell inner membrane. In Salmonella heidelberg (strain SL476), this protein is Putative multidrug resistance protein MdtD.